The chain runs to 432 residues: Glutamate-1-semialdehyde 2,1-aminomutase (432 aa).

Lys-272 bears the N6-(pyridoxal phosphate)lysine mark.

This sequence belongs to the class-III pyridoxal-phosphate-dependent aminotransferase family. HemL subfamily. Homodimer. It depends on pyridoxal 5'-phosphate as a cofactor.

It is found in the cytoplasm. The catalysed reaction is (S)-4-amino-5-oxopentanoate = 5-aminolevulinate. The protein operates within porphyrin-containing compound metabolism; protoporphyrin-IX biosynthesis; 5-aminolevulinate from L-glutamyl-tRNA(Glu): step 2/2. It participates in porphyrin-containing compound metabolism; chlorophyll biosynthesis. In Cyanothece sp. (strain PCC 7425 / ATCC 29141), this protein is Glutamate-1-semialdehyde 2,1-aminomutase.